Here is a 126-residue protein sequence, read N- to C-terminus: Large ribosomal subunit protein bL20c (126 aa).

This sequence belongs to the bacterial ribosomal protein bL20 family.

It localises to the plastid. It is found in the chloroplast. Functionally, binds directly to 23S ribosomal RNA and is necessary for the in vitro assembly process of the 50S ribosomal subunit. It is not involved in the protein synthesizing functions of that subunit. The sequence is that of Large ribosomal subunit protein bL20c from Pelargonium hortorum (Common geranium).